The sequence spans 1013 residues: GTPase-activating Rap/Ran-GAP domain-like protein 3 (1013 aa).

Residue Ser-45 is modified to Phosphoserine. The region spanning 191–407 (LLVLEEQEGS…RTLDMLIRSL (217 aa)) is the Rap-GAP domain. Residues Ser-426 and Ser-432 each carry the phosphoserine modification. Residues 489–800 (PHEAVCADPW…QLVASRSDIY (312 aa)) enclose the CNH domain. Disordered stretches follow at residues 810-842 (VSSG…SLGE) and 913-1013 (LLGL…IDLK). Positions 811–821 (SSGGSSKGASA) are enriched in low complexity. Thr-827 carries the phosphothreonine modification. Positions 952 to 962 (SSSSDRIPSGS) are enriched in low complexity. Composition is skewed to polar residues over residues 963 to 982 (LESA…SSDQ) and 993 to 1003 (VSGSSPFQLTA).

This sequence belongs to the GARNL3 family.

This is GTPase-activating Rap/Ran-GAP domain-like protein 3 (GARNL3) from Homo sapiens (Human).